Here is a 1041-residue protein sequence, read N- to C-terminus: Isoleucine--tRNA ligase (1041 aa).

The short motif at 53–63 (PFANGLPHYGH) is the 'HIGH' region element. The 'KMSKS' region signature appears at 619–623 (KMSKS). K622 provides a ligand contact to ATP.

Belongs to the class-I aminoacyl-tRNA synthetase family. IleS type 2 subfamily. In terms of assembly, monomer. Requires Zn(2+) as cofactor.

Its subcellular location is the cytoplasm. The catalysed reaction is tRNA(Ile) + L-isoleucine + ATP = L-isoleucyl-tRNA(Ile) + AMP + diphosphate. Its function is as follows. Catalyzes the attachment of isoleucine to tRNA(Ile). As IleRS can inadvertently accommodate and process structurally similar amino acids such as valine, to avoid such errors it has two additional distinct tRNA(Ile)-dependent editing activities. One activity is designated as 'pretransfer' editing and involves the hydrolysis of activated Val-AMP. The other activity is designated 'posttransfer' editing and involves deacylation of mischarged Val-tRNA(Ile). This Mycobacterium tuberculosis (strain CDC 1551 / Oshkosh) protein is Isoleucine--tRNA ligase (ileS).